Reading from the N-terminus, the 420-residue chain is 3-isopropylmalate dehydratase large subunit (420 aa).

The [4Fe-4S] cluster site is built by Cys-300, Cys-360, and Cys-363.

It belongs to the aconitase/IPM isomerase family. LeuC type 2 subfamily. In terms of assembly, heterodimer of LeuC and LeuD. The cofactor is [4Fe-4S] cluster.

It catalyses the reaction (2R,3S)-3-isopropylmalate = (2S)-2-isopropylmalate. It functions in the pathway amino-acid biosynthesis; L-leucine biosynthesis; L-leucine from 3-methyl-2-oxobutanoate: step 2/4. Catalyzes the isomerization between 2-isopropylmalate and 3-isopropylmalate, via the formation of 2-isopropylmaleate. In Halothermothrix orenii (strain H 168 / OCM 544 / DSM 9562), this protein is 3-isopropylmalate dehydratase large subunit.